We begin with the raw amino-acid sequence, 262 residues long: Putative hydro-lyase cu1581 (262 aa).

The protein belongs to the D-glutamate cyclase family.

The sequence is that of Putative hydro-lyase cu1581 from Corynebacterium urealyticum (strain ATCC 43042 / DSM 7109).